A 188-amino-acid polypeptide reads, in one-letter code: Calcium load-activated calcium channel (188 aa).

The Lumenal segment spans residues 1-4 (MSTM). A helical membrane pass occupies residues 5 to 32 (FADTILIVFISICTALLAEGITWVLVYR). Residues 32-89 (RTDKYKRLKAEVEKQSKKLEKKKETITESAGRQQKKKIERQEEKLKNNNRDLSMVRMK) are a coiled coil. Residues 33–86 (TDKYKRLKAEVEKQSKKLEKKKETITESAGRQQKKKIERQEEKLKNNNRDLSMV) lie on the Cytoplasmic side of the membrane. A helical membrane pass occupies residues 87–106 (RMKSMFAIGFCFTALMGMFN). Residues 107–120 (SIFDGRVVAKLPFV) are Lumenal-facing. Residues 121–130 (PLSYIQGLSH) lie within the membrane without spanning it. Over 131–140 (RNLLGEDYTD) the chain is Lumenal. A helical transmembrane segment spans residues 141-162 (CSFIFLYILCTMSIRQNIQKML). Residues 163–188 (GLAPSRAATKQAGGFLGPPPQAAKFS) are Cytoplasmic-facing.

The protein belongs to the TMCO1 family. As to quaternary structure, homodimer and homotetramer. Component of the multi-pass translocon (MPT) complex.

The protein localises to the endoplasmic reticulum membrane. It localises to the golgi apparatus membrane. In terms of biological role, calcium-selective channel required to prevent calcium stores from overfilling, thereby playing a key role in calcium homeostasis. In response to endoplasmic reticulum (ER) overloading, assembles into a homotetramer, forming a functional calcium-selective channel, regulating the calcium content in endoplasmic reticulum store. Component of the multi-pass translocon (MPT) complex that mediates insertion of multi-pass membrane proteins into the lipid bilayer of membranes. This chain is Calcium load-activated calcium channel, found in Danio rerio (Zebrafish).